The chain runs to 291 residues: ATP synthase gamma chain (291 aa).

This sequence belongs to the ATPase gamma chain family. In terms of assembly, F-type ATPases have 2 components, CF(1) - the catalytic core - and CF(0) - the membrane proton channel. CF(1) has five subunits: alpha(3), beta(3), gamma(1), delta(1), epsilon(1). CF(0) has three main subunits: a, b and c.

The protein localises to the cell inner membrane. In terms of biological role, produces ATP from ADP in the presence of a proton gradient across the membrane. The gamma chain is believed to be important in regulating ATPase activity and the flow of protons through the CF(0) complex. In Methylobacillus flagellatus (strain ATCC 51484 / DSM 6875 / VKM B-1610 / KT), this protein is ATP synthase gamma chain.